A 356-amino-acid polypeptide reads, in one-letter code: Histidinol-phosphate aminotransferase (356 aa).

Lys214 is modified (N6-(pyridoxal phosphate)lysine).

Belongs to the class-II pyridoxal-phosphate-dependent aminotransferase family. Histidinol-phosphate aminotransferase subfamily. As to quaternary structure, homodimer. Pyridoxal 5'-phosphate is required as a cofactor.

The catalysed reaction is L-histidinol phosphate + 2-oxoglutarate = 3-(imidazol-4-yl)-2-oxopropyl phosphate + L-glutamate. The protein operates within amino-acid biosynthesis; L-histidine biosynthesis; L-histidine from 5-phospho-alpha-D-ribose 1-diphosphate: step 7/9. The chain is Histidinol-phosphate aminotransferase from Aromatoleum aromaticum (strain DSM 19018 / LMG 30748 / EbN1) (Azoarcus sp. (strain EbN1)).